We begin with the raw amino-acid sequence, 67 residues long: Putative cytosolic sulfotransferase 2 (67 aa).

31–33 contacts 3'-phosphoadenylyl sulfate; the sequence is RDG.

The protein belongs to the sulfotransferase 1 family.

It localises to the cytoplasm. Sulfotransferase that utilizes 3'-phospho-5'-adenylyl sulfate (PAPS) as sulfonate donor. The polypeptide is Putative cytosolic sulfotransferase 2 (SOT2) (Arabidopsis thaliana (Mouse-ear cress)).